The chain runs to 161 residues: Globin CTT-IX (161 aa).

A signal peptide spans 1–16; the sequence is MKFFIVLALCIVGAIA. One can recognise a Globin domain in the interval 18 to 161; sequence PVSSDQANAI…NIFGMIFAHL (144 aa). Heme b-binding residues include histidine 76 and histidine 111.

It belongs to the globin family. In terms of assembly, homodimer.

This Chironomus thummi thummi (Midge) protein is Globin CTT-IX (CTT-9).